The primary structure comprises 156 residues: Ribosomal RNA large subunit methyltransferase H (156 aa).

Residues Leu73, Gly104, and 123–128 (VSSLTL) contribute to the S-adenosyl-L-methionine site.

The protein belongs to the RNA methyltransferase RlmH family. Homodimer.

It is found in the cytoplasm. It carries out the reaction pseudouridine(1915) in 23S rRNA + S-adenosyl-L-methionine = N(3)-methylpseudouridine(1915) in 23S rRNA + S-adenosyl-L-homocysteine + H(+). Functionally, specifically methylates the pseudouridine at position 1915 (m3Psi1915) in 23S rRNA. The polypeptide is Ribosomal RNA large subunit methyltransferase H (Paraburkholderia phytofirmans (strain DSM 17436 / LMG 22146 / PsJN) (Burkholderia phytofirmans)).